Consider the following 102-residue polypeptide: Small ribosomal subunit protein uS10 (102 aa).

Belongs to the universal ribosomal protein uS10 family. As to quaternary structure, part of the 30S ribosomal subunit.

In terms of biological role, involved in the binding of tRNA to the ribosomes. The protein is Small ribosomal subunit protein uS10 of Chelativorans sp. (strain BNC1).